The sequence spans 88 residues: N(2)-fixation sustaining protein CowN (88 aa).

This sequence belongs to the CowN family.

In terms of biological role, is required to sustain N(2)-dependent growth in the presence of low levels of carbon monoxide (CO). Probably acts by protecting the N(2) fixation ability of the nitrogenase complex, which is inactivated in the presence of CO. In Rhodomicrobium vannielii (strain ATCC 17100 / DSM 162 / LMG 4299 / NCIMB 10020 / ATH 3.1.1), this protein is N(2)-fixation sustaining protein CowN.